Consider the following 238-residue polypeptide: Uridylate kinase (238 aa).

12–15 lines the ATP pocket; the sequence is KLSG. The segment at 20-25 is involved in allosteric activation by GTP; sequence GDEGFG. Gly-54 provides a ligand contact to UMP. Gly-55 and Arg-59 together coordinate ATP. UMP is bound by residues Asp-74 and 135–142; that span reads TGSPFFTT. ATP contacts are provided by Thr-162, Tyr-168, and Asp-171.

It belongs to the UMP kinase family. As to quaternary structure, homohexamer.

The protein localises to the cytoplasm. It catalyses the reaction UMP + ATP = UDP + ADP. Its pathway is pyrimidine metabolism; CTP biosynthesis via de novo pathway; UDP from UMP (UMPK route): step 1/1. With respect to regulation, allosterically activated by GTP. Inhibited by UTP. Functionally, catalyzes the reversible phosphorylation of UMP to UDP. The chain is Uridylate kinase from Histophilus somni (strain 129Pt) (Haemophilus somnus).